The chain runs to 462 residues: Sugar transporter ERD6-like 12 (462 aa).

The next 12 helical transmembrane spans lie at 25–45 (LLIFSTFIIVSASFTFGAAIG), 62–82 (LAQFSLFGSLSTFGGMIGAIF), 101–121 (LFCITGWLAISLAKDIIWLDM), 124–144 (FLVGIGVGLISYVVPVYIAEI), 151–171 (GAFTFSNQLLQNCGVAVVYYF), 179–199 (TLAIIGSIPCWIQVIGLFFIP), 262–282 (LTIGIGLMLLQQLCGTAGISS), 297–317 (IGMMVLSLIVVPKSLMGLILV), 326–346 (LMTSALGLCLSCITLAVAFGV), 358–378 (IFCFIGILSFTMMFAIGMGAL), 399–419 (VTIANWFTGWIANYAFNFMLV), and 424–444 (GTFIISAIICGATIVFTWCLV).

This sequence belongs to the major facilitator superfamily. Sugar transporter (TC 2.A.1.1) family.

The protein localises to the membrane. Its function is as follows. Sugar transporter. The polypeptide is Sugar transporter ERD6-like 12 (SUGTL5) (Arabidopsis thaliana (Mouse-ear cress)).